The chain runs to 295 residues: 2-dehydropantoate 2-reductase (295 aa).

NADP(+) is bound by residues 9–14, Asn-100, and Ala-126; that span reads GPGAVG. Asn-100 provides a ligand contact to substrate. Lys-177 (proton donor) is an active-site residue. Positions 181 and 246 each coordinate substrate. Glu-258 serves as a coordination point for NADP(+).

Belongs to the ketopantoate reductase family.

It is found in the cytoplasm. The enzyme catalyses (R)-pantoate + NADP(+) = 2-dehydropantoate + NADPH + H(+). The protein operates within cofactor biosynthesis; (R)-pantothenate biosynthesis; (R)-pantoate from 3-methyl-2-oxobutanoate: step 2/2. Its function is as follows. Catalyzes the NADPH-dependent reduction of ketopantoate into pantoic acid. This chain is 2-dehydropantoate 2-reductase, found in Mycobacterium tuberculosis (strain CDC 1551 / Oshkosh).